The primary structure comprises 266 residues: MSNFIFGRYLPLDSVVHRLDPRAKLMLSFCYIIVVFLANNIWSYAILIAFTVGAILSSKISLGFFLKGIRPLLWLIVFTVVLQLLFSPAGGHTYFHWAFINVTQDGLINAGYIFVRFLLIIMMSTLLTLSTQPLDIATGLASLMKPLRWVKVPVDTLAMMLSIALRFVPTLMDEATKIMNAQRARGVDFGEGGLFKQAKSLIPLMVPLFMSAFNRAEDLSTAMEARGYQDSEHRSQYRILTWQRRDTVTWLLFLLGFVAILIFRHW.

The next 5 membrane-spanning stretches (helical) occupy residues 32–52 (IIVVFLANNIWSYAILIAFTV), 71–91 (PLLWLIVFTVVLQLLFSPAGG), 107–127 (LINAGYIFVRFLLIIMMSTLL), 152–172 (VPVDTLAMMLSIALRFVPTLM), and 246–266 (DTVTWLLFLLGFVAILIFRHW).

This sequence belongs to the energy-coupling factor EcfT family. As to quaternary structure, forms a stable energy-coupling factor (ECF) transporter complex composed of 2 membrane-embedded substrate-binding proteins (S component), 2 ATP-binding proteins (A component) and 2 transmembrane proteins (T component). May be able to interact with more than 1 S component at a time.

It is found in the cell membrane. In terms of biological role, transmembrane (T) component of an energy-coupling factor (ECF) ABC-transporter complex. Unlike classic ABC transporters this ECF transporter provides the energy necessary to transport a number of different substrates. The protein is Energy-coupling factor transporter transmembrane protein EcfT of Levilactobacillus brevis (strain ATCC 367 / BCRC 12310 / CIP 105137 / JCM 1170 / LMG 11437 / NCIMB 947 / NCTC 947) (Lactobacillus brevis).